Consider the following 232-residue polypeptide: Methylthioribulose-1-phosphate dehydratase (232 aa).

C91 is a binding site for substrate. Residues H109, H111, and H191 each coordinate Zn(2+).

The protein belongs to the aldolase class II family. MtnB subfamily. Zn(2+) serves as cofactor.

It localises to the cytoplasm. The catalysed reaction is 5-(methylsulfanyl)-D-ribulose 1-phosphate = 5-methylsulfanyl-2,3-dioxopentyl phosphate + H2O. It participates in amino-acid biosynthesis; L-methionine biosynthesis via salvage pathway; L-methionine from S-methyl-5-thio-alpha-D-ribose 1-phosphate: step 2/6. Catalyzes the dehydration of methylthioribulose-1-phosphate (MTRu-1-P) into 2,3-diketo-5-methylthiopentyl-1-phosphate (DK-MTP-1-P). This chain is Methylthioribulose-1-phosphate dehydratase, found in Schizosaccharomyces japonicus (strain yFS275 / FY16936) (Fission yeast).